Here is a 546-residue protein sequence, read N- to C-terminus: Chaperonin GroEL (546 aa).

ATP is bound by residues 30–33 (TLGP), Lys-51, 87–91 (DGTTT), Gly-415, 479–481 (NAA), and Asp-495. The tract at residues 526–546 (KKDEPAMPAGGGMGGMGGMDF) is disordered. Over residues 534–546 (AGGGMGGMGGMDF) the composition is skewed to gly residues.

It belongs to the chaperonin (HSP60) family. In terms of assembly, forms a cylinder of 14 subunits composed of two heptameric rings stacked back-to-back. Interacts with the co-chaperonin GroES.

Its subcellular location is the cytoplasm. It catalyses the reaction ATP + H2O + a folded polypeptide = ADP + phosphate + an unfolded polypeptide.. Together with its co-chaperonin GroES, plays an essential role in assisting protein folding. The GroEL-GroES system forms a nano-cage that allows encapsulation of the non-native substrate proteins and provides a physical environment optimized to promote and accelerate protein folding. The protein is Chaperonin GroEL of Xanthomonas oryzae pv. oryzae (strain MAFF 311018).